The following is a 456-amino-acid chain: CBL-interacting protein kinase 9 (456 aa).

The region spanning tyrosine 27 to phenylalanine 282 is the Protein kinase domain. ATP-binding positions include isoleucine 33 to valine 41 and lysine 56. The active-site Proton acceptor is aspartate 150. The tract at residues aspartate 168–glutamate 197 is activation loop. The NAF domain maps to arginine 318–glutamate 343. The segment at lysine 351–valine 380 is PPI.

The protein belongs to the protein kinase superfamily. CAMK Ser/Thr protein kinase family. SNF1 subfamily. The cofactor is Mn(2+).

The enzyme catalyses L-seryl-[protein] + ATP = O-phospho-L-seryl-[protein] + ADP + H(+). The catalysed reaction is L-threonyl-[protein] + ATP = O-phospho-L-threonyl-[protein] + ADP + H(+). In terms of biological role, CIPK serine-threonine protein kinases interact with CBL proteins. Binding of a CBL protein to the regulatory NAF domain of CIPK protein lead to the activation of the kinase in a calcium-dependent manner. In Oryza sativa subsp. japonica (Rice), this protein is CBL-interacting protein kinase 9 (CIPK9).